Reading from the N-terminus, the 349-residue chain is Thioredoxin reductase, mitochondrial (349 aa).

The N-terminal 30 residues, 1–30 (MLLVRNSTLGRLSSLRGFFRNINESNIFYR), are a transit peptide targeting the mitochondrion. Residues 41–44 (SGPA), 70–71 (IA), Gln-75, Asn-84, Val-117, Cys-175, Asp-318, and 325–327 (RQA) contribute to the FAD site. The cysteines at positions 172 and 175 are disulfide-linked.

Belongs to the class-II pyridine nucleotide-disulfide oxidoreductase family. In terms of assembly, homodimer. The cofactor is FAD.

It is found in the mitochondrion. It carries out the reaction [thioredoxin]-dithiol + NADP(+) = [thioredoxin]-disulfide + NADPH + H(+). In Kluyveromyces lactis (strain ATCC 8585 / CBS 2359 / DSM 70799 / NBRC 1267 / NRRL Y-1140 / WM37) (Yeast), this protein is Thioredoxin reductase, mitochondrial (TRR1).